The following is a 289-amino-acid chain: Rhomboid-type serine protease 2 (289 aa).

6 helical membrane-spanning segments follow: residues Val-26–Gln-46, Phe-67–Leu-87, Cys-100–Glu-120, Phe-122–Gly-142, Ile-157–Val-179, and Phe-184–Leu-203. The active-site Nucleophile is the Ser-134. Residue His-187 is part of the active site.

It belongs to the peptidase S54 family.

Its subcellular location is the golgi apparatus membrane. It is found in the golgi apparatus. The protein localises to the cis-Golgi network membrane. It catalyses the reaction Cleaves type-1 transmembrane domains using a catalytic dyad composed of serine and histidine that are contributed by different transmembrane domains.. Functionally, probable rhomboid-type serine protease that catalyzes intramembrane proteolysis. This chain is Rhomboid-type serine protease 2 (RBD2), found in Podospora anserina (Pleurage anserina).